Reading from the N-terminus, the 394-residue chain is Thioredoxin-interacting protein (394 aa).

A Glycyl lysine isopeptide (Lys-Gly) (interchain with G-Cter in ubiquitin) cross-link involves residue Lys212. Ser361 carries the post-translational modification Phosphoserine.

The protein belongs to the arrestin family. In terms of assembly, homodimer; disulfide-linked. Interacts with TXN/thioredoxin through its redox-active site. Interacts with transcriptional repressors ZBTB16, ZBTB32 and HDAC1. Interacts with DDIT4. Post-translationally, ubiquitinated; undergoes heterotypic 'Lys-48'-/'Lys-63'-branched polyubiquitination catalyzed by ITCH and UBR5 resulting in proteasomal degradation. Deubiquitinated by USP5, leading to TXNIP stabilization.

It is found in the cytoplasm. May act as an oxidative stress mediator by inhibiting thioredoxin activity or by limiting its bioavailability. Interacts with COPS5 and restores COPS5-induced suppression of CDKN1B stability, blocking the COPS5-mediated translocation of CDKN1B from the nucleus to the cytoplasm. Functions as a transcriptional repressor, possibly by acting as a bridge molecule between transcription factors and corepressor complexes, and over-expression will induce G0/G1 cell cycle arrest. Required for the maturation of natural killer cells. Acts as a suppressor of tumor cell growth. Inhibits the proteasomal degradation of DDIT4, and thereby contributes to the inhibition of the mammalian target of rapamycin complex 1 (mTORC1). The sequence is that of Thioredoxin-interacting protein (Txnip) from Rattus norvegicus (Rat).